The sequence spans 102 residues: NADH-quinone oxidoreductase subunit K (102 aa).

The next 3 helical transmembrane spans lie at 5–25, 31–51, and 65–85; these read LSHY…GIFL, IVIL…MVAF, and LFIL…LVVF.

This sequence belongs to the complex I subunit 4L family. In terms of assembly, NDH-1 is composed of 14 different subunits. Subunits NuoA, H, J, K, L, M, N constitute the membrane sector of the complex.

It is found in the cell inner membrane. The catalysed reaction is a quinone + NADH + 5 H(+)(in) = a quinol + NAD(+) + 4 H(+)(out). NDH-1 shuttles electrons from NADH, via FMN and iron-sulfur (Fe-S) centers, to quinones in the respiratory chain. The immediate electron acceptor for the enzyme in this species is believed to be ubiquinone. Couples the redox reaction to proton translocation (for every two electrons transferred, four hydrogen ions are translocated across the cytoplasmic membrane), and thus conserves the redox energy in a proton gradient. This Rhizobium leguminosarum bv. trifolii (strain WSM2304) protein is NADH-quinone oxidoreductase subunit K.